The chain runs to 409 residues: Arginine deiminase (409 aa).

Cys399 (amidino-cysteine intermediate) is an active-site residue.

Belongs to the arginine deiminase family.

It is found in the cytoplasm. The enzyme catalyses L-arginine + H2O = L-citrulline + NH4(+). Its pathway is amino-acid degradation; L-arginine degradation via ADI pathway; carbamoyl phosphate from L-arginine: step 1/2. The polypeptide is Arginine deiminase (Streptococcus sanguinis (strain SK36)).